The following is a 176-amino-acid chain: Large ribosomal subunit protein uL22 (176 aa).

Residues 113-176 (VVESRPSKDQ…ETSEAKGGSD (64 aa)) are disordered. Residues 136-152 (SKAAATAPAKKSSASKA) show a composition bias toward low complexity. Residues 159–176 (TKAESKTSETSEAKGGSD) are compositionally biased toward basic and acidic residues.

The protein belongs to the universal ribosomal protein uL22 family. Part of the 50S ribosomal subunit.

Its function is as follows. This protein binds specifically to 23S rRNA; its binding is stimulated by other ribosomal proteins, e.g. L4, L17, and L20. It is important during the early stages of 50S assembly. It makes multiple contacts with different domains of the 23S rRNA in the assembled 50S subunit and ribosome. In terms of biological role, the globular domain of the protein is located near the polypeptide exit tunnel on the outside of the subunit, while an extended beta-hairpin is found that lines the wall of the exit tunnel in the center of the 70S ribosome. The sequence is that of Large ribosomal subunit protein uL22 from Mycobacterium marinum (strain ATCC BAA-535 / M).